Here is a 363-residue protein sequence, read N- to C-terminus: MRPPIHKLICKRLADQSSHHSQHLYHQYIVRNLPAVLQMWRIPTDVPQVAVPIGLKLAEVTADTPLDEVFKHWKESGGVILKNILTPAEAHQITTELESRIDSVQRGSRVPHEDLAAFHGAKTKRAGDLINHSATFRERILENDFIHAICQRCFGEDGHNGDYWLSAATTLNASGPQPAQVLHRDLTSYPPYALLGPEGTEPQINFLFAFSDFTDDNGATRIIPGSNKWPFHQRGNMAQTIPAEMKTGDCLLIGGKVIHAMGENKTETERKCIQLTVIPSFLTPAEAHPFIIKLETVKKLSKRAQRFVGFRSQYPRGSPGLWTKDYIELALHLGLDDLQGAMEDLQHVLNQPKQWDTIDYDKM.

Histidine 183, aspartate 185, and histidine 259 together coordinate Fe cation.

The protein belongs to the PhyH family. As to quaternary structure, homodimer. The cofactor is Fe cation.

The enzyme catalyses sphingofungin B1 + 2-oxoglutarate + O2 = sphingofungin B + succinate + CO2. Its pathway is secondary metabolite biosynthesis. Functionally, dioxygenase; part of the gene cluster that mediates the biosynthesis of sphingofungins, bioactive molecules acting as sphingolipid inhibitors via inhibiting serine palmitoyl transferase (SPT). Within the pathway, sphC catalyzes the hydrolxylation at C-4 to convert sphingofungin B1 into sphingofungin B as well as presphingofungin into sphingofungin B2. Sphingofungin biosynthesis starts with the PKS sphB that produces an C18 polyketide precursor 3-hydroxyoctadeca-4,10-dienoyl-ACP containing one delta-6 desaturation and one delta-12 desaturation. The aminoacyl transferase sphA uses the sphB product to produce 3-keto-presphingofungin by adding an aminomalonate molecule. SphF then reduces the C-3 ketone of 3-keto-presphingofungin which leads to presphingofungin. The cytochrome P450 monooxygenase sphH converts presphingofungin into sphingofungin B1 which is further converted to sphingofungin B by the dioxygenase sphC. SphC is also able to convert presphingofungin into sphingofungin B2. The acetyltransferase sphE acetylates sphingofungin B to produce sphingofungin C, but can also convert sphingofungin B1 into sphingofungin C1 and sphingofungin B2 into sphingofungin C2. Finally, sphingofungin C can be spontaneously converted into sphingofungin D. In Aspergillus fumigatus (strain CBS 144.89 / FGSC A1163 / CEA10) (Neosartorya fumigata), this protein is Dioxygenase sphC.